The following is a 137-amino-acid chain: Large ribosomal subunit protein uL16 (137 aa).

Belongs to the universal ribosomal protein uL16 family. As to quaternary structure, part of the 50S ribosomal subunit.

Its function is as follows. Binds 23S rRNA and is also seen to make contacts with the A and possibly P site tRNAs. The protein is Large ribosomal subunit protein uL16 of Acinetobacter baumannii (strain SDF).